Consider the following 746-residue polypeptide: Teichoic acid poly(glycerol phosphate) polymerase (746 aa).

Residues 473 to 477 (WHGTP), Arg-540, 573 to 574 (PT), 610 to 612 (RMH), 652 to 653 (SS), and Asp-657 contribute to the CDP-glycerol site.

It belongs to the CDP-glycerol glycerophosphotransferase family.

It localises to the cell membrane. The catalysed reaction is 4-O-[(2R)-glycerylphospho]-N-acetyl-beta-D-mannosaminyl-(1-&gt;4)-N-acetyl-alpha-D-glucosaminyl di-trans,octa-cis-undecaprenyl diphosphate + n CDP-glycerol = 4-O-{[(2R)-1-glycerylphospho](n)-(2R)-1-glycerylphospho}-N-acetyl-beta-D-mannosaminyl-(1-&gt;4)-N-acetyl-alpha-D-glucosaminyl undecaprenyl diphosphate + n CMP + n H(+). Its pathway is cell wall biogenesis; poly(glycerol phosphate) teichoic acid biosynthesis. Functionally, responsible for the polymerization of the main chain of the major teichoic acid by sequential transfer of glycerol phosphate units from CDP-glycerol to the disaccharide linkage unit. Synthesizes polymers of approximately 35 glycerol phosphate units in length. The polypeptide is Teichoic acid poly(glycerol phosphate) polymerase (tagF) (Bacillus subtilis (strain 168)).